The sequence spans 165 residues: Sec-independent protein translocase protein TatB (165 aa).

The chain crosses the membrane as a helical span at residues 1 to 21 (MFDVSFTELIVIGVVALIVLG). A compositionally biased stretch (polar residues) spans 67–84 (DSTAQDVNQSLRSATDSL). Residues 67 to 165 (DSTAQDVNQS…PKSPSTGNAT (99 aa)) form a disordered region. A compositionally biased stretch (low complexity) spans 127–159 (KLPGTPATLPATAAAEPTPAAPAASQAEAPKSP).

The protein belongs to the TatB family. In terms of assembly, the Tat system comprises two distinct complexes: a TatABC complex, containing multiple copies of TatA, TatB and TatC subunits, and a separate TatA complex, containing only TatA subunits. Substrates initially bind to the TatABC complex, which probably triggers association of the separate TatA complex to form the active translocon.

It localises to the cell inner membrane. In terms of biological role, part of the twin-arginine translocation (Tat) system that transports large folded proteins containing a characteristic twin-arginine motif in their signal peptide across membranes. Together with TatC, TatB is part of a receptor directly interacting with Tat signal peptides. TatB may form an oligomeric binding site that transiently accommodates folded Tat precursor proteins before their translocation. This Bordetella avium (strain 197N) protein is Sec-independent protein translocase protein TatB.